We begin with the raw amino-acid sequence, 153 residues long: Proline-rich membrane anchor 1 (153 aa).

The first 35 residues, 1–35 (MLLRDLVPRHGCCWPSLLLHCALHPLWGLVQVTHA), serve as a signal peptide directing secretion. The Extracellular portion of the chain corresponds to 36–92 (EPQKSCSKVTDSCQHICQCRPPPPLPPPPPPPPPPRLLSAPAPNSTSCPAEDSWWSG). The 15-residue stretch at 56–70 (PPPPLPPPPPPPPPP) folds into the PRAD domain. The span at 59-71 (PLPPPPPPPPPPR) shows a compositional bias: pro residues. The segment at 59-79 (PLPPPPPPPPPPRLLSAPAPN) is disordered. Residue Asn79 is glycosylated (N-linked (GlcNAc...) asparagine). A helical membrane pass occupies residues 93–113 (LVIIVAVVCASLVFLTVLVII). Over 114–153 (CYKAIKRKPLRKDENGTSVAEYPMSSSQSHKGVDVNAAVV) the chain is Cytoplasmic. The disordered stretch occupies residues 129-153 (GTSVAEYPMSSSQSHKGVDVNAAVV).

As to quaternary structure, interacts with ACHE, probably through disulfide bonds. In terms of tissue distribution, predominantly expressed in the central nervous system, including in the brain. Also expressed in muscle, heart and kidney. Isoform 1 may be predominant in the cortex and striatum, while isoform 2 is more abundant in the cerebellum.

It localises to the cell membrane. It is found in the cell junction. The protein localises to the synapse. In terms of biological role, required to anchor acetylcholinesterase (ACHE) to the basal lamina of the neuromuscular junction and to the membrane of neuronal synapses in brain. Also able to organize ACHE into tetramers. This is Proline-rich membrane anchor 1 (Prima1) from Mus musculus (Mouse).